We begin with the raw amino-acid sequence, 523 residues long: MSQQVIIFDTTLRDGEQALQASLSVKEKLQIALALERMGVDVMEVGFPVSSPGDFESVQTIARQVKNSRVCALARCVEKDIDVAAESLKVAEAFRIHTFIATSPMHIATKLRSTLDEVIERAIYMVKRARNYTDDVEFSCEDAGRTPIADLARVVEAAINAGATTINIPDTVGYTMPFEFAGIISGLYERVPNIDKAIISVHTHDDLGLAVGNSLAAVHAGARQVEGAMNGIGERAGNCSLEEVIMAIKVRKDILNVHTAINHQEIWRTSQLVSQICNMPIPANKAIVGSGAFAHSSGIHQDGVLKNRENYEIMTPESIGLNQIQLNLTSRSGRAAVKHRMDEMGYKESEYNLDNLYDAFLKLADKKGQVFDYDLEALAFIGKQQEEPEHFRLDYFSVQSSSNDIATAAVKLACGEEVKAEAANGNGPVDAVYQAINRITDYNVELVKYSLTAKGHGKDALGQVDIVANYNGRRFHGVGLATDIVESSAKAMVHVLNNIWRAAEVEKELQRKAQHNENNKETV.

One can recognise a Pyruvate carboxyltransferase domain in the interval Val5 to Trp267. 4 residues coordinate Mn(2+): Asp14, His202, His204, and Asn238. A regulatory domain region spans residues Arg392–Val523.

It belongs to the alpha-IPM synthase/homocitrate synthase family. LeuA type 1 subfamily. As to quaternary structure, homodimer. The cofactor is Mn(2+).

Its subcellular location is the cytoplasm. It carries out the reaction 3-methyl-2-oxobutanoate + acetyl-CoA + H2O = (2S)-2-isopropylmalate + CoA + H(+). Its pathway is amino-acid biosynthesis; L-leucine biosynthesis; L-leucine from 3-methyl-2-oxobutanoate: step 1/4. Its function is as follows. Catalyzes the condensation of the acetyl group of acetyl-CoA with 3-methyl-2-oxobutanoate (2-ketoisovalerate) to form 3-carboxy-3-hydroxy-4-methylpentanoate (2-isopropylmalate). The chain is 2-isopropylmalate synthase from Shigella dysenteriae serotype 1 (strain Sd197).